Consider the following 579-residue polypeptide: Glutamine--tRNA ligase (579 aa).

The 'HIGH' region signature appears at 41–51 (PEPNGYLHIGH). Residues 42–44 (EPN) and 48–54 (HIGHAKA) each bind ATP. L-glutamine is bound by residues Asp-74 and Tyr-218. Residues Thr-237, 285 to 286 (RL), and 293 to 295 (MSK) contribute to the ATP site. The 'KMSKS' region signature appears at 292–296 (VMSKR).

Belongs to the class-I aminoacyl-tRNA synthetase family. Monomer.

Its subcellular location is the cytoplasm. The catalysed reaction is tRNA(Gln) + L-glutamine + ATP = L-glutaminyl-tRNA(Gln) + AMP + diphosphate. The polypeptide is Glutamine--tRNA ligase (Xanthomonas euvesicatoria pv. vesicatoria (strain 85-10) (Xanthomonas campestris pv. vesicatoria)).